The following is a 590-amino-acid chain: Acetolactate synthase large subunit (590 aa).

Residue E61 coordinates thiamine diphosphate. FAD is bound by residues R163, 271–292, and 314–333; these read HGTAYANFAVSECDLLIALGAR and DIDPAEVGKNRIPQVAIVGD. The interval 405–484 is thiamine pyrophosphate binding; the sequence is QHQMWSAQFL…VKIIIINNRW (80 aa). 2 residues coordinate Mg(2+): D455 and N482.

Belongs to the TPP enzyme family. As to quaternary structure, dimer of large and small chains. Requires Mg(2+) as cofactor. The cofactor is thiamine diphosphate.

The protein resides in the plastid. It localises to the chloroplast. The enzyme catalyses 2 pyruvate + H(+) = (2S)-2-acetolactate + CO2. It functions in the pathway amino-acid biosynthesis; L-isoleucine biosynthesis; L-isoleucine from 2-oxobutanoate: step 1/4. The protein operates within amino-acid biosynthesis; L-valine biosynthesis; L-valine from pyruvate: step 1/4. This chain is Acetolactate synthase large subunit (ilvB), found in Pyropia yezoensis (Susabi-nori).